A 91-amino-acid polypeptide reads, in one-letter code: uncharacterized protein (91 aa).

The next 2 membrane-spanning stretches (helical) occupy residues W22–V42 and V53–A73.

Its subcellular location is the cell membrane. This is an uncharacterized protein from Mycobacterium bovis (strain ATCC BAA-935 / AF2122/97).